The primary structure comprises 263 residues: Flagellar brake protein YcgR (263 aa).

Residues 1–21 (MAELSTPSPASPAPLDGGRGD) are disordered. A PilZ domain is found at 133 to 250 (QRREFYRLQV…DTRIQRYIFK (118 aa)).

The protein belongs to the YcgR family. Monomer. Interacts with the flagellar basal bodies.

The protein localises to the bacterial flagellum basal body. Its function is as follows. Acts as a flagellar brake, regulating swimming and swarming in a bis-(3'-5') cyclic diguanylic acid (c-di-GMP)-dependent manner. Binds 1 c-di-GMP dimer per subunit. Increasing levels of c-di-GMP lead to decreased motility. This is Flagellar brake protein YcgR from Thauera aminoaromatica.